A 667-amino-acid chain; its full sequence is Transmembrane 9 superfamily member 1 (667 aa).

Residues 1 to 22 (MIYKMAHVQLLLLYFFVSTVKA) form the signal peptide. At 23-302 (FYLPGVAPTT…DKYLHVYDPS (280 aa)) the chain is on the lumenal side. N-linked (GlcNAc...) asparagine glycans are attached at residues N61 and N282. The helical transmembrane segment at 303–323 (IQWFSLINFSLVVVLLSSVVI) threads the bilayer. Over 324–370 (HSLLRALKSDFARYNELNLDDDFQEDSGWKLNHGDVFRSPSQSLTLS) the chain is Cytoplasmic. Residues 371–391 (ILVGSGVQLFLMVTCSIFFAA) traverse the membrane as a helical segment. At 392–405 (LGFLSPSSRGSLAT) the chain is on the lumenal side. Residues 406 to 426 (VMFILYALFGFVGSYTSMGIY) form a helical membrane-spanning segment. Residues 427-442 (KFFNGPYWKANLILTP) lie on the Cytoplasmic side of the membrane. The chain crosses the membrane as a helical span at residues 443–463 (LLVPGAILLIIIALNFFLMFV). At 464-474 (HSSGVIPASTL) the chain is on the lumenal side. The helical transmembrane segment at 475–495 (FFMVFLWFLFSIPLSFAGSLI) threads the bilayer. Over 496–527 (ARKRCHWDEHPTKTNQIARQIPFQPWYLKTIP) the chain is Cytoplasmic. Residues 528–548 (ATLIAGIFPFGSIAVELYFIY) traverse the membrane as a helical segment. Topologically, residues 549-560 (TSLWFNKIFYMF) are lumenal. The helical transmembrane segment at 561–581 (GFLFFSFLLLTLTSSLVTILI) threads the bilayer. At 582-596 (TYHSLCLENWKWQWR) the chain is on the cytoplasmic side. A helical transmembrane segment spans residues 597-617 (GFIIGGAGCALYVFIHSILFT). Over 618 to 635 (KFKLGGFTTIVLYVGYSS) the chain is Lumenal. A helical membrane pass occupies residues 636–656 (VISLLCCLVTGSIGFISSMLF). Residues 657–667 (VRKIYSSIKVD) lie on the Cytoplasmic side of the membrane.

Belongs to the nonaspanin (TM9SF) (TC 9.A.2) family.

It is found in the endosome membrane. The protein localises to the vacuole membrane. With TMN2 and TMN3, plays a critical role in the late stages of a nutrient-controlled pathway notably regulating FLO11 gene expression. Acts downstream of RAS2 and TOR. Essential for cell adhesion and filamentous growth. May play a role as effector of cellular copper homeostasis. This chain is Transmembrane 9 superfamily member 1 (EMP70), found in Saccharomyces cerevisiae (strain ATCC 204508 / S288c) (Baker's yeast).